A 140-amino-acid chain; its full sequence is Putative nickel-responsive regulator (140 aa).

Ni(2+)-binding residues include His-76, His-87, His-89, and Cys-95.

This sequence belongs to the transcriptional regulatory CopG/NikR family. Requires Ni(2+) as cofactor.

In terms of biological role, transcriptional regulator. The sequence is that of Putative nickel-responsive regulator from Rhodopseudomonas palustris (strain BisB5).